We begin with the raw amino-acid sequence, 333 residues long: Phosphoribosylformylglycinamidine cyclo-ligase (333 aa).

Belongs to the AIR synthase family.

The protein localises to the cytoplasm. It catalyses the reaction 2-formamido-N(1)-(5-O-phospho-beta-D-ribosyl)acetamidine + ATP = 5-amino-1-(5-phospho-beta-D-ribosyl)imidazole + ADP + phosphate + H(+). The protein operates within purine metabolism; IMP biosynthesis via de novo pathway; 5-amino-1-(5-phospho-D-ribosyl)imidazole from N(2)-formyl-N(1)-(5-phospho-D-ribosyl)glycinamide: step 2/2. The protein is Phosphoribosylformylglycinamidine cyclo-ligase of Methanococcoides burtonii (strain DSM 6242 / NBRC 107633 / OCM 468 / ACE-M).